The primary structure comprises 294 residues: Cytidine deaminase (294 aa).

CMP/dCMP-type deaminase domains are found at residues 49–169 (TPQQ…FGPA) and 188–294 (ETQD…YIAL). Substrate is bound at residue 90 to 92 (NLE). A Zn(2+)-binding site is contributed by H103. The active-site Proton donor is the E105. Positions 130 and 133 each coordinate Zn(2+).

This sequence belongs to the cytidine and deoxycytidylate deaminase family. As to quaternary structure, homodimer. Requires Zn(2+) as cofactor.

The catalysed reaction is cytidine + H2O + H(+) = uridine + NH4(+). It catalyses the reaction 2'-deoxycytidine + H2O + H(+) = 2'-deoxyuridine + NH4(+). Functionally, this enzyme scavenges exogenous and endogenous cytidine and 2'-deoxycytidine for UMP synthesis. The sequence is that of Cytidine deaminase from Pasteurella multocida (strain Pm70).